The following is a 1045-amino-acid chain: Tyrosine-protein kinase-like otk (1045 aa).

A signal peptide spans 1–25; it reads MPIVMDMNMLLMLSLAFTVMAPASA. 5 Ig-like C2-type domains span residues 26–116, 115–200, 260–373, 376–469, and 474–564; these read SSSR…AKLS, LSVI…RVMS, PEGL…APVN, PGAL…VAIN, and PRFS…VRLL. At 26–587 the chain is on the extracellular side; that stretch reads SSSRFTQPPQ…AGDGFLVTRA (562 aa). 4 disulfide bridges follow: cysteine 49-cysteine 97, cysteine 139-cysteine 189, cysteine 285-cysteine 362, and cysteine 406-cysteine 453. Residues asparagine 344, asparagine 424, asparagine 435, asparagine 442, asparagine 450, asparagine 463, asparagine 518, and asparagine 530 are each glycosylated (N-linked (GlcNAc...) asparagine). Cysteine 496 and cysteine 548 form a disulfide bridge. The helical transmembrane segment at 588–608 threads the bilayer; sequence VLITMTVALAYIVLVVGLMLW. Topologically, residues 609–1045 are cytoplasmic; that stretch reads CRYRRQARKA…LSKAMQAAEK (437 aa). Positions 628-676 are disordered; sequence AGGDQAESGKNTEQEPCLSKQRNGHGKSRTAANGDAQKSDDTACSQQSK. The residue at position 681 (serine 681) is a Phosphoserine. The Protein kinase; inactive domain occupies 695–1040; the sequence is LSELIQIGRG…QLGAALSKAM (346 aa). Positions 722–790 are disordered; sequence ASPSDKDADT…QPQEQAQSES (69 aa). A compositionally biased stretch (basic and acidic residues) spans 725-736; that stretch reads SDKDADTEKQHS. Residues 743–752 show a composition bias toward gly residues; it reads GASGASGCGS. A compositionally biased stretch (acidic residues) spans 771 to 782; sequence DDIEEIKEEEQP.

It belongs to the protein kinase superfamily. Tyr protein kinase family. Insulin receptor subfamily. In terms of assembly, interacts with plexA; component of a receptor complex that mediates the repulsive signaling in response to Semaphorin ligands.

Its subcellular location is the cell membrane. Its function is as follows. Acts as a calcium-dependent, homophilic cell adhesion molecule that regulates neural recognition during the development of the nervous system. Component of the repulsive Plexin signaling response to regulate motor axon guidance at the embryonic stage. Also component of a receptor complex that is required in the adult visual system to innervate the lamina layer; specific targeting of R1-R6 axons. The protein is Tyrosine-protein kinase-like otk of Drosophila mojavensis (Fruit fly).